A 274-amino-acid polypeptide reads, in one-letter code: S-adenosylmethionine decarboxylase proenzyme (274 aa).

The active-site Schiff-base intermediate with substrate; via pyruvic acid is the S119. A Pyruvic acid (Ser); by autocatalysis modification is found at S119. The Proton acceptor; for processing activity role is filled by H124. Residue C147 is the Proton donor; for catalytic activity of the active site.

It belongs to the prokaryotic AdoMetDC family. Type 2 subfamily. Heterooctamer of four alpha and four beta chains arranged as a tetramer of alpha/beta heterodimers. The cofactor is pyruvate. Is synthesized initially as an inactive proenzyme. Formation of the active enzyme involves a self-maturation process in which the active site pyruvoyl group is generated from an internal serine residue via an autocatalytic post-translational modification. Two non-identical subunits are generated from the proenzyme in this reaction, and the pyruvate is formed at the N-terminus of the alpha chain, which is derived from the carboxyl end of the proenzyme. The post-translation cleavage follows an unusual pathway, termed non-hydrolytic serinolysis, in which the side chain hydroxyl group of the serine supplies its oxygen atom to form the C-terminus of the beta chain, while the remainder of the serine residue undergoes an oxidative deamination to produce ammonia and the pyruvoyl group blocking the N-terminus of the alpha chain.

It catalyses the reaction S-adenosyl-L-methionine + H(+) = S-adenosyl 3-(methylsulfanyl)propylamine + CO2. The protein operates within amine and polyamine biosynthesis; S-adenosylmethioninamine biosynthesis; S-adenosylmethioninamine from S-adenosyl-L-methionine: step 1/1. Catalyzes the decarboxylation of S-adenosylmethionine to S-adenosylmethioninamine (dcAdoMet), the propylamine donor required for the synthesis of the polyamines spermine and spermidine from the diamine putrescine. The sequence is that of S-adenosylmethionine decarboxylase proenzyme from Clostridium acetobutylicum (strain ATCC 824 / DSM 792 / JCM 1419 / IAM 19013 / LMG 5710 / NBRC 13948 / NRRL B-527 / VKM B-1787 / 2291 / W).